We begin with the raw amino-acid sequence, 553 residues long: Putative polyamine transporter (553 aa).

Helical transmembrane passes span 43-63, 68-88, 133-153, 163-183, 190-210, 240-260, 280-300, 333-353, 397-417, 453-473, and 485-505; these read WSIF…AACF, LVVG…TSVA, ITAA…LHSF, AQIF…ACFP, FSSA…IMIL, WPTG…MSGY, AIVL…IAIA, VIGA…NCLL, LLLL…SIGA, IGWV…FPTV, and WTCL…VVYA.

Belongs to the amino acid-polyamine-organocation (APC) superfamily.

It localises to the membrane. The chain is Putative polyamine transporter (GPT1) from Candida albicans (Yeast).